Consider the following 373-residue polypeptide: Dual-specificity RNA methyltransferase RlmN (373 aa).

The active-site Proton acceptor is Glu94. Residues 100–339 enclose the Radical SAM core domain; sequence EDDRATLCVS…VIVRKTRGDD (240 aa). An intrachain disulfide couples Cys107 to Cys344. [4Fe-4S] cluster contacts are provided by Cys114, Cys118, and Cys121. S-adenosyl-L-methionine contacts are provided by residues 168–169, Ser200, 222–224, and Asn301; these read GE and SIH. The S-methylcysteine intermediate role is filled by Cys344.

This sequence belongs to the radical SAM superfamily. RlmN family. [4Fe-4S] cluster is required as a cofactor.

The protein localises to the cytoplasm. It catalyses the reaction adenosine(2503) in 23S rRNA + 2 reduced [2Fe-2S]-[ferredoxin] + 2 S-adenosyl-L-methionine = 2-methyladenosine(2503) in 23S rRNA + 5'-deoxyadenosine + L-methionine + 2 oxidized [2Fe-2S]-[ferredoxin] + S-adenosyl-L-homocysteine. The enzyme catalyses adenosine(37) in tRNA + 2 reduced [2Fe-2S]-[ferredoxin] + 2 S-adenosyl-L-methionine = 2-methyladenosine(37) in tRNA + 5'-deoxyadenosine + L-methionine + 2 oxidized [2Fe-2S]-[ferredoxin] + S-adenosyl-L-homocysteine. Specifically methylates position 2 of adenine 2503 in 23S rRNA and position 2 of adenine 37 in tRNAs. m2A2503 modification seems to play a crucial role in the proofreading step occurring at the peptidyl transferase center and thus would serve to optimize ribosomal fidelity. The chain is Dual-specificity RNA methyltransferase RlmN from Shewanella putrefaciens (strain CN-32 / ATCC BAA-453).